Reading from the N-terminus, the 182-residue chain is Isopentenyl-diphosphate Delta-isomerase (182 aa).

The Mn(2+) site is built by His25 and His32. A Nudix hydrolase domain is found at 30-164 (LLHLAFSSWL…PWAFSPWMVM (135 aa)). Residue Cys67 is part of the active site. Mn(2+) is bound at residue His69. Residue Glu87 coordinates Mg(2+). Mn(2+)-binding residues include Glu114 and Glu116. The active site involves Glu116.

Belongs to the IPP isomerase type 1 family. In terms of assembly, homodimer. Requires Mg(2+) as cofactor. Mn(2+) is required as a cofactor.

The protein resides in the cytoplasm. The catalysed reaction is isopentenyl diphosphate = dimethylallyl diphosphate. The protein operates within isoprenoid biosynthesis; dimethylallyl diphosphate biosynthesis; dimethylallyl diphosphate from isopentenyl diphosphate: step 1/1. In terms of biological role, catalyzes the 1,3-allylic rearrangement of the homoallylic substrate isopentenyl (IPP) to its highly electrophilic allylic isomer, dimethylallyl diphosphate (DMAPP). In Shigella boydii serotype 18 (strain CDC 3083-94 / BS512), this protein is Isopentenyl-diphosphate Delta-isomerase.